Consider the following 370-residue polypeptide: MSEQNRLLLIGGDGVGAEVVHEAGRIAQWFAARRGLPLSIGQAAFGVEVLNRTGRIMTDDTLAQIRAADAVLFGAIGGPEYDRLPLEQVREEGLLRIRRELGLYANLRPVRYWPALAELCPFVPERVEKVDMMIVRELAGGIYYASPRGIDQTGDGRRVGTNTQRYDDLEIRRIARVAFELARARGGRVCSVDKSNVLESGLLWREEVQACRDAEYPDVELEHILVDNCALQLCLRPARFDVLLADNLFGDILSDAAGAVAGSLGMLPSASFGAEDGGRRRGFYEPVHGSAPDIAGQGIANPLGAILSLALALRWTFRQPAEADLLERAVERALAGGARTLDLLAGAAAPALSTRAMADAVLQALETLAA.

Substrate is bound by residues Arg98, Arg108, Arg136, and Asp227. Asp227, Asp251, and Asp255 together coordinate Mg(2+). Position 289–301 (289–301) interacts with NAD(+); that stretch reads GSAPDIAGQGIAN.

It belongs to the isocitrate and isopropylmalate dehydrogenases family. LeuB type 1 subfamily. As to quaternary structure, homodimer. Mg(2+) is required as a cofactor. It depends on Mn(2+) as a cofactor.

It is found in the cytoplasm. It carries out the reaction (2R,3S)-3-isopropylmalate + NAD(+) = 4-methyl-2-oxopentanoate + CO2 + NADH. The protein operates within amino-acid biosynthesis; L-leucine biosynthesis; L-leucine from 3-methyl-2-oxobutanoate: step 3/4. Functionally, catalyzes the oxidation of 3-carboxy-2-hydroxy-4-methylpentanoate (3-isopropylmalate) to 3-carboxy-4-methyl-2-oxopentanoate. The product decarboxylates to 4-methyl-2 oxopentanoate. This is 3-isopropylmalate dehydrogenase 1 from Bordetella bronchiseptica (strain ATCC BAA-588 / NCTC 13252 / RB50) (Alcaligenes bronchisepticus).